The sequence spans 424 residues: UDP-N-acetylglucosamine 1-carboxyvinyltransferase 3 (424 aa).

Residue 22 to 23 coordinates phosphoenolpyruvate; that stretch reads KN. R94 contributes to the UDP-N-acetyl-alpha-D-glucosamine binding site. The Proton donor role is filled by D118. Residues 123-127, D306, and L328 contribute to the UDP-N-acetyl-alpha-D-glucosamine site; that span reads RPVDQ.

Belongs to the EPSP synthase family. MurA subfamily.

Its subcellular location is the cytoplasm. The enzyme catalyses phosphoenolpyruvate + UDP-N-acetyl-alpha-D-glucosamine = UDP-N-acetyl-3-O-(1-carboxyvinyl)-alpha-D-glucosamine + phosphate. The protein operates within cell wall biogenesis; peptidoglycan biosynthesis. Functionally, cell wall formation. Adds enolpyruvyl to UDP-N-acetylglucosamine. In Symbiobacterium thermophilum (strain DSM 24528 / JCM 14929 / IAM 14863 / T), this protein is UDP-N-acetylglucosamine 1-carboxyvinyltransferase 3.